The sequence spans 104 residues: U20-lycotoxin-Ls1c (104 aa).

A signal peptide spans 1–30; that stretch reads MFSTSDQVSKMNSRILSALLILGIATCVIA. The WAP domain occupies 31-76; it reads GGFCPKSRHPQCDLSYKINDCCAQSDCRVGSVCCVEGCGNVCRAES. Intrachain disulfides connect C34-C64, C42-C68, C51-C63, C52-C90, and C57-C72.

The protein belongs to the venom protein 11 family. 02 (wap-2) subfamily. In terms of processing, contains 5 disulfide bonds. Expressed by the venom gland.

It is found in the secreted. Has antibacterial activity. The polypeptide is U20-lycotoxin-Ls1c (Lycosa singoriensis (Wolf spider)).